A 273-amino-acid polypeptide reads, in one-letter code: Ribosomal RNA small subunit methyltransferase A (273 aa).

6 residues coordinate S-adenosyl-L-methionine: N18, L20, G45, E66, D91, and N113.

It belongs to the class I-like SAM-binding methyltransferase superfamily. rRNA adenine N(6)-methyltransferase family. RsmA subfamily.

The protein localises to the cytoplasm. It catalyses the reaction adenosine(1518)/adenosine(1519) in 16S rRNA + 4 S-adenosyl-L-methionine = N(6)-dimethyladenosine(1518)/N(6)-dimethyladenosine(1519) in 16S rRNA + 4 S-adenosyl-L-homocysteine + 4 H(+). In terms of biological role, specifically dimethylates two adjacent adenosines (A1518 and A1519) in the loop of a conserved hairpin near the 3'-end of 16S rRNA in the 30S particle. May play a critical role in biogenesis of 30S subunits. This Escherichia coli O17:K52:H18 (strain UMN026 / ExPEC) protein is Ribosomal RNA small subunit methyltransferase A.